Consider the following 158-residue polypeptide: ATP synthase subunit delta, mitochondrial (158 aa).

Residues 1–22 (MFRLTSARALFRVANVAARRTY) constitute a mitochondrion transit peptide.

The protein belongs to the ATPase epsilon chain family. In terms of assembly, F-type ATPases have 2 components, CF(1) - the catalytic core - and CF(0) - the membrane proton channel. CF(1) has five subunits: alpha(3), beta(3), gamma(1), delta(1), epsilon(1). CF(0) has three main subunits: a, b and c.

The protein localises to the mitochondrion. The protein resides in the mitochondrion inner membrane. Mitochondrial membrane ATP synthase (F(1)F(0) ATP synthase or Complex V) produces ATP from ADP in the presence of a proton gradient across the membrane which is generated by electron transport complexes of the respiratory chain. F-type ATPases consist of two structural domains, F(1) - containing the extramembraneous catalytic core, and F(0) - containing the membrane proton channel, linked together by a central stalk and a peripheral stalk. During catalysis, ATP turnover in the catalytic domain of F(1) is coupled via a rotary mechanism of the central stalk subunits to proton translocation. Part of the complex F(1) domain and of the central stalk which is part of the complex rotary element. Rotation of the central stalk against the surrounding alpha(3)beta(3) subunits leads to hydrolysis of ATP in three separate catalytic sites on the beta subunits. This Eremothecium gossypii (strain ATCC 10895 / CBS 109.51 / FGSC 9923 / NRRL Y-1056) (Yeast) protein is ATP synthase subunit delta, mitochondrial (ATP16).